Reading from the N-terminus, the 1581-residue chain is MKEIIKLSILGKDSIHIGLHLWPHITNELFTCIFSPTYVIITDSNIETLYIPSFKTYFISMAKQRSINSRLLFFTIPPGEKSKSRKTKALIEDWLLSEKCTRDTVIIAIGGGVIGDLVGYVSATFMRGVRFIQIPTTLLAMVDSSIGGKNSINTSYGKNAIGTIWQPERIFIDFTFLETLTEKEFINGIAELIKTIIIWDESEFASLENISEKIAKTVRSMSLTSNKHSKFNEIIKDLKRYIISSIKIKAHIVSIDEKEKDLRTLLNFGHSIGHAIETVLAPYILHGESISIGMVKEAELSRHLGILNPNVVSRLIKCLNTWGLPTSFKDRRFKEVILGKKHLIEDILEIMSIDKKNDSNNKKIVLLSAIGKTYEKKASSVSDDDIRTILSQNILLYGIPLNAFQKHTTITLPGSKSISNRALILASLSNGICYLKNFLHSDDTYYMLSALEKLNAAEFKWEQDGDVLVVKGKSGYLENPQMELYLGNSGTTARFLTSICTLVQPNSRENHLILTGSNRMKQRPIGPLVDALKNNGCCIEYLELENCLPLLIKPKEIGLYGGNINLSATVSSQYVSSILMCSPYAKTQVTLSLIGGKPISQPYIDMTISMMSSFGIKVTRSHSKENTYYIPKGCYTCPSEYIIEGDATSATYPLAIAAITGGSCTISNVGSASLQGDSKFSEYILKPMGCEVVQSPTTTYIKGPPKGKLKSLGSINMESMTDTFLTAAVLASVAYEESKPYVTKITGISNQRIKECNRINAMVCELKKFGIEAGELPDGIYVKALNTSNLPYSVEGINCYNDHRIAMSFSVLACISSKPTTILDKACVNKTWPYWWDILNSTFKVQMKGIEFDLNPTINSSILHHPSECTIFLIGMRGAGKTTLGQLAANFLGREFIDLDSIIEEDIKTTILEFIQKYSWDVFRRKELHFLKTLLTEKKENYIISCGGGIIETEEARDLLISYIEANGIVIHIHRNIQDIIKYLNTDKTRAPYQDNIMHVWERRKRWYNLCSSHQFHMTSTDPTEFKKNIPLNLKSSFNNFLRTITGKNNIFSLILKKKRSYFLSLAFSDLENIFSLLDIITAGCDAIEIRIDLFQKPEEIDKYPSLEYIAEKIFLLRQKTSLPLIYTLRTTNHGGSFLSSEKKLAKEYILHGAKWGFEFLDIELDIASELFKTINNSWPYTKIIASYHNIEKPISCDDFEWIQKYKEAQHYGHIIKLVGTSSSIEDNFFLEEFKSKFINKKVPSIIINTGIKGQLSRIMNTFMTPVTHPSLPSKIAPGQLSIKEINTALHIMGLLPEKKYFLFGKPIKHSQSPNIHNLGFEILGLPYKYQLFETDSISELKEILHLEEFGGASVTIPLKTNISILLDEISDHAALIGSVNTITRTYNNGQYILKGENTDWQGIIKAIKNFNKFEKSFENFSGFIIGAGGASRAAIYALLSLGISPIYLINRSKDKLNKLYHFFNTNHIIPITEYHELNNINFDIRIGISTIPTDNPIDPSVLEIAKIFFNLKRKSSEGIFLDMAYGSNTTDLTIIAKACNWKIIHGLEILLEQGSEQFLLWTETYIPYNQVKYAILGPNK.

The 3-dehydroquinate synthase stretch occupies residues 1–383; sequence MKEIIKLSIL…YEKKASSVSD (383 aa). NAD(+) contacts are provided by residues 43–45, 80–83, 111–113, and Asp-116; these read DSN, EKSK, and GGV. Arg-127 contributes to the 7-phospho-2-dehydro-3-deoxy-D-arabino-heptonate binding site. Residue 136–137 participates in NAD(+) binding; the sequence is TT. 7-phospho-2-dehydro-3-deoxy-D-arabino-heptonate is bound by residues Asp-143 and Lys-149. Lys-158 lines the NAD(+) pocket. Asn-159 lines the 7-phospho-2-dehydro-3-deoxy-D-arabino-heptonate pocket. NAD(+) is bound by residues 176 to 179 and Asn-187; that span reads FLET. Zn(2+) is bound at residue Glu-191. 7-phospho-2-dehydro-3-deoxy-D-arabino-heptonate contacts are provided by residues 191–194 and Lys-249; that span reads ELIK. Glu-259 serves as the catalytic Proton acceptor; for 3-dehydroquinate synthase activity. 7-phospho-2-dehydro-3-deoxy-D-arabino-heptonate is bound by residues 263-267 and His-270; that span reads RTLLN. His-270 lines the Zn(2+) pocket. His-274 acts as the Proton acceptor; for 3-dehydroquinate synthase activity in catalysis. Positions 286 and 355 each coordinate 7-phospho-2-dehydro-3-deoxy-D-arabino-heptonate. His-286 contributes to the Zn(2+) binding site. The tract at residues 396–845 is EPSP synthase; the sequence is LYGIPLNAFQ…WDILNSTFKV (450 aa). The For EPSP synthase activity role is filled by Cys-827. The interval 868–1065 is shikimate kinase; the sequence is ECTIFLIGMR…LKKKRSYFLS (198 aa). 875–882 is an ATP binding site; it reads GMRGAGKT. The interval 1066 to 1285 is 3-dehydroquinase; sequence LAFSDLENIF…IAPGQLSIKE (220 aa). The active-site Proton acceptor; for 3-dehydroquinate dehydratase activity is the His-1189. The active-site Schiff-base intermediate with substrate; for 3-dehydroquinate dehydratase activity is Lys-1217. The shikimate dehydrogenase stretch occupies residues 1298–1581; sequence EKKYFLFGKP…VKYAILGPNK (284 aa).

This sequence in the N-terminal section; belongs to the sugar phosphate cyclases superfamily. Dehydroquinate synthase family. In the 2nd section; belongs to the EPSP synthase family. It in the 3rd section; belongs to the shikimate kinase family. The protein in the 4th section; belongs to the type-I 3-dehydroquinase family. This sequence in the C-terminal section; belongs to the shikimate dehydrogenase family. As to quaternary structure, homodimer. Zn(2+) serves as cofactor.

Its subcellular location is the cytoplasm. It carries out the reaction 7-phospho-2-dehydro-3-deoxy-D-arabino-heptonate = 3-dehydroquinate + phosphate. It catalyses the reaction 3-dehydroquinate = 3-dehydroshikimate + H2O. The catalysed reaction is shikimate + NADP(+) = 3-dehydroshikimate + NADPH + H(+). The enzyme catalyses shikimate + ATP = 3-phosphoshikimate + ADP + H(+). It carries out the reaction 3-phosphoshikimate + phosphoenolpyruvate = 5-O-(1-carboxyvinyl)-3-phosphoshikimate + phosphate. The protein operates within metabolic intermediate biosynthesis; chorismate biosynthesis; chorismate from D-erythrose 4-phosphate and phosphoenolpyruvate: step 2/7. Its pathway is metabolic intermediate biosynthesis; chorismate biosynthesis; chorismate from D-erythrose 4-phosphate and phosphoenolpyruvate: step 3/7. It functions in the pathway metabolic intermediate biosynthesis; chorismate biosynthesis; chorismate from D-erythrose 4-phosphate and phosphoenolpyruvate: step 4/7. It participates in metabolic intermediate biosynthesis; chorismate biosynthesis; chorismate from D-erythrose 4-phosphate and phosphoenolpyruvate: step 5/7. The protein operates within metabolic intermediate biosynthesis; chorismate biosynthesis; chorismate from D-erythrose 4-phosphate and phosphoenolpyruvate: step 6/7. Its function is as follows. The AROM polypeptide catalyzes 5 consecutive enzymatic reactions in prechorismate polyaromatic amino acid biosynthesis. The chain is Pentafunctional AROM polypeptide (arom) from Pneumocystis carinii.